The following is a 221-amino-acid chain: uncharacterized protein (221 aa).

Positions 1 to 11 are enriched in basic residues; the sequence is MGEKSRRKGPA. Disordered stretches follow at residues 1–23 and 139–169; these read MGEK…GRTC and SNFQ…SAPE. Composition is skewed to basic and acidic residues over residues 13–23 and 155–168; these read RHADGKLGRTC and DKRS…RSAP.

This is an uncharacterized protein from Homo sapiens (Human).